A 313-amino-acid chain; its full sequence is Formimidoylglutamase (313 aa).

Mn(2+) contacts are provided by histidine 130, aspartate 155, histidine 157, aspartate 159, aspartate 241, and aspartate 243.

This sequence belongs to the arginase family. It depends on Mn(2+) as a cofactor.

It carries out the reaction N-formimidoyl-L-glutamate + H2O = formamide + L-glutamate. The protein operates within amino-acid degradation; L-histidine degradation into L-glutamate; L-glutamate from N-formimidoyl-L-glutamate (hydrolase route): step 1/1. In terms of biological role, catalyzes the conversion of N-formimidoyl-L-glutamate to L-glutamate and formamide. The chain is Formimidoylglutamase from Salmonella paratyphi B (strain ATCC BAA-1250 / SPB7).